An 809-amino-acid polypeptide reads, in one-letter code: Glycerol-3-phosphate acyltransferase (809 aa).

The short motif at 306 to 311 is the HXXXXD motif element; the sequence is HRSHMD.

The protein belongs to the GPAT/DAPAT family.

Its subcellular location is the cell inner membrane. The enzyme catalyses sn-glycerol 3-phosphate + an acyl-CoA = a 1-acyl-sn-glycero-3-phosphate + CoA. Its pathway is phospholipid metabolism; CDP-diacylglycerol biosynthesis; CDP-diacylglycerol from sn-glycerol 3-phosphate: step 1/3. The sequence is that of Glycerol-3-phosphate acyltransferase from Vibrio vulnificus (strain YJ016).